Consider the following 100-residue polypeptide: NADH-quinone oxidoreductase subunit K (100 aa).

The next 3 membrane-spanning stretches (helical) occupy residues 4 to 24, 28 to 48, and 60 to 80; these read LQHG…GLII, LLFM…AFVV, and VMYI…LALL.

The protein belongs to the complex I subunit 4L family. As to quaternary structure, NDH-1 is composed of 13 different subunits. Subunits NuoA, H, J, K, L, M, N constitute the membrane sector of the complex.

It localises to the cell inner membrane. The catalysed reaction is a quinone + NADH + 5 H(+)(in) = a quinol + NAD(+) + 4 H(+)(out). Its function is as follows. NDH-1 shuttles electrons from NADH, via FMN and iron-sulfur (Fe-S) centers, to quinones in the respiratory chain. The immediate electron acceptor for the enzyme in this species is believed to be ubiquinone. Couples the redox reaction to proton translocation (for every two electrons transferred, four hydrogen ions are translocated across the cytoplasmic membrane), and thus conserves the redox energy in a proton gradient. This chain is NADH-quinone oxidoreductase subunit K, found in Yersinia enterocolitica serotype O:8 / biotype 1B (strain NCTC 13174 / 8081).